Reading from the N-terminus, the 177-residue chain is N-acetylmuramoyl-L-alanine amidase A (177 aa).

The N-acetylmuramoyl-L-alanine amidase domain occupies 23–158 (QTSAVIMHTM…SGNENRYDPG (136 aa)). An intrachain disulfide couples Cys114 to Cys121.

It is found in the secreted. The enzyme catalyses Hydrolyzes the link between N-acetylmuramoyl residues and L-amino acid residues in certain cell-wall glycopeptides.. In terms of biological role, antibacterial activity against Gram-positive bacteria M.luteus, S.aureus, E.faecalis and P.acidilactici and Gram-negative bacterium E.coli. This Achromobacter lyticus protein is N-acetylmuramoyl-L-alanine amidase A (cwhA).